The primary structure comprises 623 residues: Membrane protein insertase YidC (623 aa).

Residues 8-28 (LILATGLSFLVIMVWFFLFPP) form a helical membrane-spanning segment. A disordered region spans residues 33-64 (TEGEPTVATQQTAVAPSATPDAPTTAVPPDAD). The span at 44–62 (TAVAPSATPDAPTTAVPPD) shows a compositional bias: low complexity. Helical transmembrane passes span 379–399 (MGLAIIALTFLLKALVLPLAY), 449–469 (LPILIQIPIFFSLYKVIFVTI), 507–527 (TTMALIFIGALPILLGVSMWL), and 543–563 (IFAWMPWVFMFMLGHFASGLV). The segment covering 601–617 (KPAAQPAGKAANDGAAP) has biased composition (low complexity). Residues 601-623 (KPAAQPAGKAANDGAAPAKKRKP) form a disordered region.

The protein belongs to the OXA1/ALB3/YidC family. Type 1 subfamily. In terms of assembly, interacts with the Sec translocase complex via SecD. Specifically interacts with transmembrane segments of nascent integral membrane proteins during membrane integration.

The protein resides in the cell inner membrane. Functionally, required for the insertion and/or proper folding and/or complex formation of integral membrane proteins into the membrane. Involved in integration of membrane proteins that insert both dependently and independently of the Sec translocase complex, as well as at least some lipoproteins. Aids folding of multispanning membrane proteins. This is Membrane protein insertase YidC from Cereibacter sphaeroides (strain KD131 / KCTC 12085) (Rhodobacter sphaeroides).